The primary structure comprises 112 residues: Putative UPF0320 protein YEL074W (112 aa).

Residues 93–112 (EKSPSKSPKHKNILPFNFTK) form a disordered region.

It belongs to the UPF0320 family.

The chain is Putative UPF0320 protein YEL074W from Saccharomyces cerevisiae (strain ATCC 204508 / S288c) (Baker's yeast).